The chain runs to 650 residues: Chaperone protein DnaK (650 aa).

Threonine 200 carries the phosphothreonine; by autocatalysis modification.

This sequence belongs to the heat shock protein 70 family.

Functionally, acts as a chaperone. The chain is Chaperone protein DnaK from Paraburkholderia phytofirmans (strain DSM 17436 / LMG 22146 / PsJN) (Burkholderia phytofirmans).